The sequence spans 415 residues: Tumor necrosis factor receptor superfamily member 3 (415 aa).

The first 30 residues, Met-1–Pro-30, serve as a signal peptide directing secretion. At Gln-31–Leu-223 the chain is on the extracellular side. N-linked (GlcNAc...) asparagine glycosylation is present at Asn-40. TNFR-Cys repeat units lie at residues Thr-42–Lys-81, Thr-82–Cys-124, Arg-125–Val-170, and Pro-171–Lys-213. 10 cysteine pairs are disulfide-bonded: Cys-43–Cys-58, Cys-59–Cys-72, Cys-62–Cys-80, Cys-83–Cys-98, Cys-101–Cys-116, Cys-104–Cys-124, Cys-126–Cys-132, Cys-139–Cys-150, Cys-142–Cys-169, and Cys-172–Cys-187. An N-linked (GlcNAc...) asparagine glycan is attached at Asn-179. The chain crosses the membrane as a helical span at residues Leu-224–Trp-244. Residues Met-245–Leu-415 lie on the Cytoplasmic side of the membrane. Positions His-261–Pro-304 are disordered. Ser-315 is modified (phosphoserine). Residues Leu-361–Gly-399 are disordered. Positions Gly-368–Thr-380 are enriched in pro residues.

Self-associates; dimerization and trimerization are promoted by lymphotoxin (LTA(3)). Associates with TRAF3. Associates with TRAF4. Associates with TRAF5.

Its subcellular location is the membrane. Functionally, receptor for the heterotrimeric lymphotoxin containing LTA and LTB, and for TNFS14/LIGHT. Activates NF-kappa-B signaling upon stimulation with lymphotoxin. Promotes apoptosis via TRAF3 and TRAF5. May play a role in the development of lymphoid organs. In terms of biological role, (Microbial infection) Plays a role in host defense against Zika virus infection. This chain is Tumor necrosis factor receptor superfamily member 3 (Ltbr), found in Mus musculus (Mouse).